The following is an 852-amino-acid chain: MKVARSKWTILIANILVPISILVFSSGFFPYKTLLTGFATHEHTIGGQIPPGVFDKVLLLQADFHASDFVYSQHSGFLFTQRLGGGFLIRSGAALPFTAYASAPTVTMPRLKAITTGSVPSFLDVILNIAEADTSSTLMHQDTWLAQLKAKGGKLVMYGDDTWLKLFPGMFHRADGTTSFFVSDFTEVDNNVTRHIPNELLQDDWSAFIMHYLGLDHIGHKAGPNSPYMITKQHEMDSVVSMVYTALEQEKHLKTTLFVLCGDHGMNEAGNHGGSSVGETSPALLFISPKFQRLETRNDSPTEEFSDLQYYHTVEQTDITPTLAGLLGLPIPLNSLGVFIPELLAMWDHGAKSIPLTSSSGPHRIHMLLENAKQLLGAVKGSFPSYSFEFDLMPVICSSQSLIDIERVQCAWFRVLETLNGSGANHDSEASSEIESALLLFLRNAQKLMSSAASDYDLIRLYVGLSISGFAISLTFFPAKRLLVNFAPAGMFLGFSILSYSTMMFASSYVEEEQQFWYWISMGWVVYLHVKYAGHFHGNSIQKSGPANGHWPFEPSLPWFGAAALAVSYRVLRRWNQTGQKFAAQPDITGSFFPSHQHTLWALLSLAASDSPELLGNSFLQPVAMLTDGMHLLYHARMVLCGISLLMIYSLYAGKARETTHKGRGKWPPSTIFHETLTLFLLMQSKVTNIPAFLVFRVQITILASMRLSTVEQTITSLLMQYVTFYAFGGSNAISSVDISNAYNGIGTYSVFIVGALTFISNWAAPIWWVSASRLLRSSQNREEKEAHVTILTLHMATILMSVMAACTTLRTHLFIWTVFSPKYLYTIAWAMINHIVVNVLGEIDWRLFMKR.

Asn191 and Asn420 each carry an N-linked (GlcNAc...) asparagine glycan. A run of 3 helical transmembrane segments spans residues 458 to 478, 486 to 506, and 516 to 536; these read LIRLYVGLSISGFAISLTFFP, FAPAGMFLGFSILSYSTMMFA, and FWYWISMGWVVYLHVKYAGHF. Asn576 carries an N-linked (GlcNAc...) asparagine glycan. 6 consecutive transmembrane segments (helical) span residues 632 to 652, 676 to 696, 714 to 734, 750 to 770, 787 to 807, and 824 to 844; these read LLYHARMVLCGISLLMIYSLY, TLTLFLLMQSKVTNIPAFLVF, TITSLLMQYVTFYAFGGSNAI, SVFIVGALTFISNWAAPIWWV, AHVTILTLHMATILMSVMAAC, and YLYTIAWAMINHIVVNVLGEI.

This sequence belongs to the PIGG/PIGN/PIGO family. PIGG subfamily.

Its subcellular location is the endoplasmic reticulum membrane. Its pathway is glycolipid biosynthesis; glycosylphosphatidylinositol-anchor biosynthesis. Its function is as follows. Ethanolamine phosphate transferase involved in glycosylphosphatidylinositol-anchor biosynthesis. Transfers ethanolamine phosphate to the GPI second mannose. This Aspergillus oryzae (strain ATCC 42149 / RIB 40) (Yellow koji mold) protein is GPI ethanolamine phosphate transferase 2 (las21).